Here is a 398-residue protein sequence, read N- to C-terminus: tRNA(Ile)-lysidine synthase (398 aa).

25-30 (SGGVDS) contacts ATP.

This sequence belongs to the tRNA(Ile)-lysidine synthase family.

It is found in the cytoplasm. It catalyses the reaction cytidine(34) in tRNA(Ile2) + L-lysine + ATP = lysidine(34) in tRNA(Ile2) + AMP + diphosphate + H(+). Ligates lysine onto the cytidine present at position 34 of the AUA codon-specific tRNA(Ile) that contains the anticodon CAU, in an ATP-dependent manner. Cytidine is converted to lysidine, thus changing the amino acid specificity of the tRNA from methionine to isoleucine. In Francisella tularensis subsp. novicida (strain U112), this protein is tRNA(Ile)-lysidine synthase.